Here is a 460-residue protein sequence, read N- to C-terminus: Endoglucanase 2 (460 aa).

A signal peptide spans 1 to 32; sequence MIKGSSLKRIKSLVMMAIFSVSIITTAIVSSA. Residue Glu-99 is the Proton donor of the active site. Asp-155 (nucleophile) is an active-site residue. One can recognise a Dockerin domain in the interval 400–460; that stretch reads QQGLKGDVNN…FAQLKVKLLN (61 aa).

This sequence belongs to the glycosyl hydrolase 8 (cellulase D) family.

The enzyme catalyses Endohydrolysis of (1-&gt;4)-beta-D-glucosidic linkages in cellulose, lichenin and cereal beta-D-glucans.. The polypeptide is Endoglucanase 2 (celB) (Ruminiclostridium josui (Clostridium josui)).